Consider the following 187-residue polypeptide: UPF0340 protein str1894 (187 aa).

The protein belongs to the UPF0340 family.

This chain is UPF0340 protein str1894, found in Streptococcus thermophilus (strain CNRZ 1066).